Here is a 215-residue protein sequence, read N- to C-terminus: UPF0502 protein PP_2442 (215 aa).

This sequence belongs to the UPF0502 family.

The chain is UPF0502 protein PP_2442 from Pseudomonas putida (strain ATCC 47054 / DSM 6125 / CFBP 8728 / NCIMB 11950 / KT2440).